Reading from the N-terminus, the 46-residue chain is Phoratoxin (46 aa).

Cystine bridges form between Cys-3–Cys-40, Cys-4–Cys-32, and Cys-16–Cys-26. His-46 is subject to Blocked carboxyl end (His).

This sequence belongs to the plant thionin (TC 1.C.44) family.

It localises to the secreted. In terms of biological role, thionins are small plant proteins which are toxic to animal cells. They seem to exert their toxic effect at the level of the cell membrane. Their precise function is not known. This is Phoratoxin from Phoradendron leucarpum subsp. tomentosum (California mistletoe).